A 586-amino-acid chain; its full sequence is GRB2-associated-binding protein 3 (586 aa).

The PH domain maps to 5–117; sequence DAVCTGWLVK…WVHSISQVCN (113 aa). 2 disordered regions span residues 149 to 171 and 281 to 335; these read AHAASSSLPRDDPNTNAVATEET and SSTI…KKPE. The span at 283-292 shows a compositional bias: polar residues; sequence TIQVDKNQGS. The span at 316–326 shows a compositional bias: basic and acidic residues; sequence HLSERRQEEWS. Ser344 carries the post-translational modification Phosphoserine. The disordered stretch occupies residues 401–453; it reads GASGLGPHCSPDDYIPMNSGSISSPLPELPANLEPPPVNRDLKPQRKSRPPPL. Position 482 is a phosphoserine (Ser482).

This sequence belongs to the GAB family. As to quaternary structure, interacts with PIK3R/p85, SHP2 and GRAP2/MONA. May interact with Grb2. Phosphorylated on tyrosine residue(s) after macrophage colony-stimulating factor (M-CSF) receptor stimulation.

This is GRB2-associated-binding protein 3 (GAB3) from Homo sapiens (Human).